Here is a 657-residue protein sequence, read N- to C-terminus: tRNA 5-methylaminomethyl-2-thiouridine biosynthesis bifunctional protein MnmC (657 aa).

A tRNA (mnm(5)s(2)U34)-methyltransferase region spans residues 1–233; the sequence is MPRALEPAEP…KWQMTVASFR (233 aa). Residues 257-657 form an FAD-dependent cmnm(5)s(2)U34 oxidoreductase region; the sequence is IGAGLAGCAV…LRALRHGHTG (401 aa).

It in the N-terminal section; belongs to the methyltransferase superfamily. tRNA (mnm(5)s(2)U34)-methyltransferase family. This sequence in the C-terminal section; belongs to the DAO family. Requires FAD as cofactor.

Its subcellular location is the cytoplasm. The enzyme catalyses 5-aminomethyl-2-thiouridine(34) in tRNA + S-adenosyl-L-methionine = 5-methylaminomethyl-2-thiouridine(34) in tRNA + S-adenosyl-L-homocysteine + H(+). In terms of biological role, catalyzes the last two steps in the biosynthesis of 5-methylaminomethyl-2-thiouridine (mnm(5)s(2)U) at the wobble position (U34) in tRNA. Catalyzes the FAD-dependent demodification of cmnm(5)s(2)U34 to nm(5)s(2)U34, followed by the transfer of a methyl group from S-adenosyl-L-methionine to nm(5)s(2)U34, to form mnm(5)s(2)U34. This Cupriavidus necator (strain ATCC 17699 / DSM 428 / KCTC 22496 / NCIMB 10442 / H16 / Stanier 337) (Ralstonia eutropha) protein is tRNA 5-methylaminomethyl-2-thiouridine biosynthesis bifunctional protein MnmC.